A 493-amino-acid chain; its full sequence is Acetyl-coenzyme A carboxylase carboxyl transferase subunit beta (493 aa).

A CoA carboxyltransferase N-terminal domain is found at 231 to 493 (LWVQCENCYG…FKLHAFFPLN (263 aa)). Residues Cys235, Cys238, Cys254, and Cys257 each contribute to the Zn(2+) site. The C4-type zinc finger occupies 235-257 (CENCYGLNYKKFLKSKINLCEQC).

This sequence belongs to the AccD/PCCB family. In terms of assembly, acetyl-CoA carboxylase is a heterohexamer composed of biotin carboxyl carrier protein, biotin carboxylase and 2 subunits each of ACCase subunit alpha and ACCase plastid-coded subunit beta (accD). Zn(2+) serves as cofactor.

The protein localises to the plastid stroma. It catalyses the reaction N(6)-carboxybiotinyl-L-lysyl-[protein] + acetyl-CoA = N(6)-biotinyl-L-lysyl-[protein] + malonyl-CoA. It functions in the pathway lipid metabolism; malonyl-CoA biosynthesis; malonyl-CoA from acetyl-CoA: step 1/1. Its function is as follows. Component of the acetyl coenzyme A carboxylase (ACC) complex. Biotin carboxylase (BC) catalyzes the carboxylation of biotin on its carrier protein (BCCP) and then the CO(2) group is transferred by the transcarboxylase to acetyl-CoA to form malonyl-CoA. This is Acetyl-coenzyme A carboxylase carboxyl transferase subunit beta from Epifagus virginiana (Beechdrops).